The sequence spans 384 residues: 1-deoxy-D-xylulose 5-phosphate reductoisomerase (384 aa).

The NADPH site is built by T10, G11, S12, I13, N38, and N120. Residue K121 coordinates 1-deoxy-D-xylulose 5-phosphate. Residue E122 participates in NADPH binding. D146 is a binding site for Mn(2+). Residues S147, E148, S172, and H195 each contribute to the 1-deoxy-D-xylulose 5-phosphate site. Residue E148 participates in Mn(2+) binding. G201 provides a ligand contact to NADPH. Positions 208, 213, 214, and 217 each coordinate 1-deoxy-D-xylulose 5-phosphate. Residue E217 participates in Mn(2+) binding.

This sequence belongs to the DXR family. Requires Mg(2+) as cofactor. Mn(2+) serves as cofactor.

It catalyses the reaction 2-C-methyl-D-erythritol 4-phosphate + NADP(+) = 1-deoxy-D-xylulose 5-phosphate + NADPH + H(+). It participates in isoprenoid biosynthesis; isopentenyl diphosphate biosynthesis via DXP pathway; isopentenyl diphosphate from 1-deoxy-D-xylulose 5-phosphate: step 1/6. Its function is as follows. Catalyzes the NADPH-dependent rearrangement and reduction of 1-deoxy-D-xylulose-5-phosphate (DXP) to 2-C-methyl-D-erythritol 4-phosphate (MEP). This chain is 1-deoxy-D-xylulose 5-phosphate reductoisomerase, found in Protochlamydia amoebophila (strain UWE25).